The following is a 306-amino-acid chain: Methionyl-tRNA formyltransferase (306 aa).

Ser-108 to Pro-111 is a binding site for (6S)-5,6,7,8-tetrahydrofolate.

The protein belongs to the Fmt family.

The enzyme catalyses L-methionyl-tRNA(fMet) + (6R)-10-formyltetrahydrofolate = N-formyl-L-methionyl-tRNA(fMet) + (6S)-5,6,7,8-tetrahydrofolate + H(+). Its function is as follows. Attaches a formyl group to the free amino group of methionyl-tRNA(fMet). The formyl group appears to play a dual role in the initiator identity of N-formylmethionyl-tRNA by promoting its recognition by IF2 and preventing the misappropriation of this tRNA by the elongation apparatus. In Paenarthrobacter aurescens (strain TC1), this protein is Methionyl-tRNA formyltransferase.